We begin with the raw amino-acid sequence, 89 residues long: Small ribosomal subunit protein uS14 (89 aa).

It belongs to the universal ribosomal protein uS14 family. Part of the 30S ribosomal subunit. Contacts proteins S3 and S10.

Binds 16S rRNA, required for the assembly of 30S particles and may also be responsible for determining the conformation of the 16S rRNA at the A site. This is Small ribosomal subunit protein uS14 from Azobacteroides pseudotrichonymphae genomovar. CFP2.